A 120-amino-acid polypeptide reads, in one-letter code: MSAQEIIRSIEAEQLKSNLPEIYIGDTVRVGVKIKEGEKYRVQPYEGVVIARRNGGINETITVRRVFQGVGVERVFLLHSPRIDNIKVLRRGKVRRAKLYYLRGRVGKATRIKQRFDRSL.

It belongs to the bacterial ribosomal protein bL19 family.

This protein is located at the 30S-50S ribosomal subunit interface and may play a role in the structure and function of the aminoacyl-tRNA binding site. The protein is Large ribosomal subunit protein bL19 (rplS) of Nostoc sp. (strain PCC 7120 / SAG 25.82 / UTEX 2576).